Consider the following 220-residue polypeptide: Histone deacetylase complex subunit SAP30 (220 aa).

The segment at 1-129 (MNGFTPDEMS…QSVRNRRKRK (129 aa)) is interaction with NCOR1. Thr5 carries the phosphothreonine modification. The Atypical zinc-finger motif lies at 67-115 (CCLREDGERCGRAAGNASFSKRIQKSISQKKVKIELDKSARHLYICDYH). Lys87 is covalently cross-linked (Glycyl lysine isopeptide (Lys-Gly) (interchain with G-Cter in SUMO2)). The segment at 123–143 (RNRRKRKGSDDDGGDSPVQDI) is disordered. An interaction with SIN3A region spans residues 130-220 (GSDDDGGDSP…SDLKVDSGVH (91 aa)). Ser131 and Ser138 each carry phosphoserine. Phosphothreonine is present on Thr145. Glycyl lysine isopeptide (Lys-Gly) (interchain with G-Cter in SUMO2) cross-links involve residues Lys194, Lys205, and Lys214.

This sequence belongs to the SAP30 family. Component of the histone deacetylase complex that includes at least SIN3A, HDAC1 and HDAC2. Found in a complex composed of at least SINHCAF, SIN3A, HDAC1, SAP30, RBBP4, OGT and TET1. Interacts with HDAC1. Interacts with SIN3A, SIN3B, HDAC2, RBBP4 and NCOR1. Interacts with SAMSN1. Interacts with HCFC1. Interacts with SAP30BP. In terms of tissue distribution, expressed in all tissues tested with highest levels in pancreas, ovary, PBL, spleen and thymus; lowest levels in brain, placenta, lung and kidney.

It localises to the nucleus. Functionally, involved in the functional recruitment of the Sin3-histone deacetylase complex (HDAC) to a specific subset of N-CoR corepressor complexes. Capable of transcription repression by N-CoR. Active in deacetylating core histone octamers (when in a complex) but inactive in deacetylating nucleosomal histones. (Microbial infection) Involved in transcriptional repression of HHV-1 genes TK and gC. This chain is Histone deacetylase complex subunit SAP30, found in Homo sapiens (Human).